The primary structure comprises 602 residues: Pyranose dehydrogenase 1 (602 aa).

Residues 1–25 form the signal peptide; that stretch reads MLPRVTKLNSRLLSLALLGIQIARG. N-linked (GlcNAc...) asparagine glycosylation is present at Asn-100. A Tele-8alpha-FAD histidine modification is found at His-128. Residues Asn-200, Asn-277, and Asn-344 are each glycosylated (N-linked (GlcNAc...) asparagine). The active-site Proton acceptor is His-537. His-581 is a catalytic residue.

This sequence belongs to the GMC oxidoreductase family. As to quaternary structure, monomer. Requires FAD as cofactor. In terms of processing, N-glycosylated.

It is found in the secreted. The enzyme catalyses pyranose + acceptor = pyranos-2-ulose + reduced acceptor.. The catalysed reaction is pyranose + acceptor = pyranos-3-ulose + reduced acceptor.. It catalyses the reaction pyranose + acceptor = pyranos-2,3-diulose + reduced acceptor.. It carries out the reaction a pyranoside + acceptor = a pyranosid-3-ulose + reduced acceptor.. The enzyme catalyses a pyranoside + acceptor = a pyranosid-3,4-diulose + reduced acceptor.. Catalyzes the single-oxidation or sequential double oxidation reaction of carbohydrates primarily at carbon-2 and/or carbon-3 with the concomitant reduction of the flavin. The enzyme exhibits a broad sugar substrate specificity, oxidizing different aldopyranoses to the corresponding C-1, C-2, C-3 or C-1,2, C-2,3 and C-3,4 (di)dehydro sugars with substrate-specific regioselectivity. Accepts only a narrow range of electron acceptors such as substituted benzoquinones and complexed metal ions and reacts extremely slowly with O(2) as acceptor. May play a role in the natural recycling of plant matter by oxidizing all major monosaccharides in lignocellulose and by reducing quinone compounds or reactive radical species generated during lignin depolymerization. The protein is Pyranose dehydrogenase 1 of Leucoagaricus meleagris (Western flat-topped agaric).